The chain runs to 612 residues: Probable exonuclease subunit 2 (612 aa).

35–42 (GGNGLGKS) contacts ATP. Coiled-coil stretches lie at residues 163–193 (NQEQ…GQMA) and 288–459 (SRAS…VADL).

This sequence to phage T4 protein GP46. As to quaternary structure, could consist of two subunits: D13 and D12.

Functionally, possible exonuclease that may play a role in viral genome replication, DNA recombination, and host DNA degradation. The protein is Probable exonuclease subunit 2 (D13) of Escherichia phage T5 (Enterobacteria phage T5).